We begin with the raw amino-acid sequence, 201 residues long: tRNA (guanine-N(7)-)-methyltransferase (201 aa).

S-adenosyl-L-methionine-binding residues include glutamate 33, glutamate 58, aspartate 85, and aspartate 108. Residue aspartate 108 is part of the active site. The substrate site is built by lysine 112 and aspartate 144.

This sequence belongs to the class I-like SAM-binding methyltransferase superfamily. TrmB family.

The enzyme catalyses guanosine(46) in tRNA + S-adenosyl-L-methionine = N(7)-methylguanosine(46) in tRNA + S-adenosyl-L-homocysteine. It participates in tRNA modification; N(7)-methylguanine-tRNA biosynthesis. Catalyzes the formation of N(7)-methylguanine at position 46 (m7G46) in tRNA. The sequence is that of tRNA (guanine-N(7)-)-methyltransferase from Anaeromyxobacter dehalogenans (strain 2CP-C).